A 340-amino-acid polypeptide reads, in one-letter code: N-acetyl-gamma-glutamyl-phosphate reductase (340 aa).

Cysteine 148 is an active-site residue.

Belongs to the NAGSA dehydrogenase family. Type 1 subfamily.

It localises to the cytoplasm. The enzyme catalyses N-acetyl-L-glutamate 5-semialdehyde + phosphate + NADP(+) = N-acetyl-L-glutamyl 5-phosphate + NADPH + H(+). Its pathway is amino-acid biosynthesis; L-arginine biosynthesis; N(2)-acetyl-L-ornithine from L-glutamate: step 3/4. In terms of biological role, catalyzes the NADPH-dependent reduction of N-acetyl-5-glutamyl phosphate to yield N-acetyl-L-glutamate 5-semialdehyde. In Methanosarcina mazei (strain ATCC BAA-159 / DSM 3647 / Goe1 / Go1 / JCM 11833 / OCM 88) (Methanosarcina frisia), this protein is N-acetyl-gamma-glutamyl-phosphate reductase.